The following is a 264-amino-acid chain: S-adenosylmethionine decarboxylase proenzyme (264 aa).

Ser-112 serves as the catalytic Schiff-base intermediate with substrate; via pyruvic acid. Ser-112 is modified (pyruvic acid (Ser); by autocatalysis). Catalysis depends on His-117, which acts as the Proton acceptor; for processing activity. Cys-140 serves as the catalytic Proton donor; for catalytic activity.

Belongs to the prokaryotic AdoMetDC family. Type 2 subfamily. Heterooctamer of four alpha and four beta chains arranged as a tetramer of alpha/beta heterodimers. It depends on pyruvate as a cofactor. Post-translationally, is synthesized initially as an inactive proenzyme. Formation of the active enzyme involves a self-maturation process in which the active site pyruvoyl group is generated from an internal serine residue via an autocatalytic post-translational modification. Two non-identical subunits are generated from the proenzyme in this reaction, and the pyruvate is formed at the N-terminus of the alpha chain, which is derived from the carboxyl end of the proenzyme. The post-translation cleavage follows an unusual pathway, termed non-hydrolytic serinolysis, in which the side chain hydroxyl group of the serine supplies its oxygen atom to form the C-terminus of the beta chain, while the remainder of the serine residue undergoes an oxidative deamination to produce ammonia and the pyruvoyl group blocking the N-terminus of the alpha chain.

It catalyses the reaction S-adenosyl-L-methionine + H(+) = S-adenosyl 3-(methylsulfanyl)propylamine + CO2. The protein operates within amine and polyamine biosynthesis; S-adenosylmethioninamine biosynthesis; S-adenosylmethioninamine from S-adenosyl-L-methionine: step 1/1. Catalyzes the decarboxylation of S-adenosylmethionine to S-adenosylmethioninamine (dcAdoMet), the propylamine donor required for the synthesis of the polyamines spermine and spermidine from the diamine putrescine. The protein is S-adenosylmethionine decarboxylase proenzyme of Salmonella agona (strain SL483).